Here is a 294-residue protein sequence, read N- to C-terminus: tRNA dimethylallyltransferase (294 aa).

9–16 (GPTASGKS) contributes to the ATP binding site. 11–16 (TASGKS) contributes to the substrate binding site. Positions 155-159 (QRVIR) are interaction with substrate tRNA.

The protein belongs to the IPP transferase family. As to quaternary structure, monomer. Requires Mg(2+) as cofactor.

It catalyses the reaction adenosine(37) in tRNA + dimethylallyl diphosphate = N(6)-dimethylallyladenosine(37) in tRNA + diphosphate. Its function is as follows. Catalyzes the transfer of a dimethylallyl group onto the adenine at position 37 in tRNAs that read codons beginning with uridine, leading to the formation of N6-(dimethylallyl)adenosine (i(6)A). The sequence is that of tRNA dimethylallyltransferase from Leuconostoc citreum (strain KM20).